The following is a 221-amino-acid chain: Ribosomal RNA large subunit methyltransferase E (221 aa).

Positions 60, 62, 89, 105, and 134 each coordinate S-adenosyl-L-methionine. Lysine 174 functions as the Proton acceptor in the catalytic mechanism.

This sequence belongs to the class I-like SAM-binding methyltransferase superfamily. RNA methyltransferase RlmE family.

It localises to the cytoplasm. The enzyme catalyses uridine(2552) in 23S rRNA + S-adenosyl-L-methionine = 2'-O-methyluridine(2552) in 23S rRNA + S-adenosyl-L-homocysteine + H(+). Specifically methylates the uridine in position 2552 of 23S rRNA at the 2'-O position of the ribose in the fully assembled 50S ribosomal subunit. The sequence is that of Ribosomal RNA large subunit methyltransferase E from Cupriavidus taiwanensis (strain DSM 17343 / BCRC 17206 / CCUG 44338 / CIP 107171 / LMG 19424 / R1) (Ralstonia taiwanensis (strain LMG 19424)).